We begin with the raw amino-acid sequence, 348 residues long: Histidinol-phosphate aminotransferase (348 aa).

Position 207 is an N6-(pyridoxal phosphate)lysine (Lys207).

The protein belongs to the class-II pyridoxal-phosphate-dependent aminotransferase family. Histidinol-phosphate aminotransferase subfamily. In terms of assembly, homodimer. Requires pyridoxal 5'-phosphate as cofactor.

It catalyses the reaction L-histidinol phosphate + 2-oxoglutarate = 3-(imidazol-4-yl)-2-oxopropyl phosphate + L-glutamate. The protein operates within amino-acid biosynthesis; L-histidine biosynthesis; L-histidine from 5-phospho-alpha-D-ribose 1-diphosphate: step 7/9. This Rippkaea orientalis (strain PCC 8801 / RF-1) (Cyanothece sp. (strain PCC 8801)) protein is Histidinol-phosphate aminotransferase.